The sequence spans 706 residues: Parasporal crystal protein Cry18Aa (706 aa).

Belongs to the delta endotoxin family.

Functionally, binds to the brush border membrane vesicles of scarab larvae and somehow damages the gut wall to allow the vegetative cells of P.popilliae to enter the hemolymph. Active on M.melolontha. In Paenibacillus popilliae (Bacillus popilliae), this protein is Parasporal crystal protein Cry18Aa (cry18Aa).